Here is a 126-residue protein sequence, read N- to C-terminus: Holo-[acyl-carrier-protein] synthase (126 aa).

2 residues coordinate Mg(2+): aspartate 9 and glutamate 58.

This sequence belongs to the P-Pant transferase superfamily. AcpS family. Requires Mg(2+) as cofactor.

The protein localises to the cytoplasm. The enzyme catalyses apo-[ACP] + CoA = holo-[ACP] + adenosine 3',5'-bisphosphate + H(+). In terms of biological role, transfers the 4'-phosphopantetheine moiety from coenzyme A to a Ser of acyl-carrier-protein. The chain is Holo-[acyl-carrier-protein] synthase from Pectobacterium atrosepticum (strain SCRI 1043 / ATCC BAA-672) (Erwinia carotovora subsp. atroseptica).